The chain runs to 131 residues: MSWQTYVDEHLMCDIEGHQLGSAAILGHAGTVWAQSTAFPQFKPEEIAAIMKDFDEPGHLAPTGMFVATAKYMVIAGEPGAVIRGKKGSGGITIKKTGQALVVGIYDEPMTPGQCNMVVERLGDYLLEQGL.

An intrachain disulfide couples Cys-13 to Cys-115. An Involved in PIP2 interaction motif is present at residues 81–97 (AVIRGKKGSGGITIKKT). The residue at position 111 (Thr-111) is a Phosphothreonine.

It belongs to the profilin family. In terms of assembly, occurs in many kinds of cells as a complex with monomeric actin in a 1:1 ratio. Post-translationally, phosphorylated by MAP kinases.

The protein resides in the cytoplasm. It localises to the cytoskeleton. In terms of biological role, binds to actin and affects the structure of the cytoskeleton. At high concentrations, profilin prevents the polymerization of actin, whereas it enhances it at low concentrations. In Olea europaea (Common olive), this protein is Profilin-3.